Here is a 451-residue protein sequence, read N- to C-terminus: tRNA-2-methylthio-N(6)-dimethylallyladenosine synthase (451 aa).

The region spanning 11–127 (RHYHITTFGC…LEDLLQQVFD (117 aa)) is the MTTase N-terminal domain. [4Fe-4S] cluster contacts are provided by Cys20, Cys56, Cys90, Cys162, Cys166, and Cys169. Residues 148–385 (RDSTITAWVN…NHLVAQKAAE (238 aa)) enclose the Radical SAM core domain. Positions 388-451 (QRYLGRIEEV…RAFSLTGEIV (64 aa)) constitute a TRAM domain.

It belongs to the methylthiotransferase family. MiaB subfamily. As to quaternary structure, monomer. It depends on [4Fe-4S] cluster as a cofactor.

The protein resides in the cytoplasm. It catalyses the reaction N(6)-dimethylallyladenosine(37) in tRNA + (sulfur carrier)-SH + AH2 + 2 S-adenosyl-L-methionine = 2-methylsulfanyl-N(6)-dimethylallyladenosine(37) in tRNA + (sulfur carrier)-H + 5'-deoxyadenosine + L-methionine + A + S-adenosyl-L-homocysteine + 2 H(+). Catalyzes the methylthiolation of N6-(dimethylallyl)adenosine (i(6)A), leading to the formation of 2-methylthio-N6-(dimethylallyl)adenosine (ms(2)i(6)A) at position 37 in tRNAs that read codons beginning with uridine. This is tRNA-2-methylthio-N(6)-dimethylallyladenosine synthase from Rippkaea orientalis (strain PCC 8801 / RF-1) (Cyanothece sp. (strain PCC 8801)).